Here is an 81-residue protein sequence, read N- to C-terminus: ATP synthase subunit c (81 aa).

A run of 2 helical transmembrane segments spans residues 4 to 24 and 57 to 77; these read MIAQ…AIGA and VGLV…FVFA.

The protein belongs to the ATPase C chain family. As to quaternary structure, F-type ATPases have 2 components, F(1) - the catalytic core - and F(0) - the membrane proton channel. F(1) has five subunits: alpha(3), beta(3), gamma(1), delta(1), epsilon(1). F(0) has three main subunits: a(1), b(2) and c(10-14). The alpha and beta chains form an alternating ring which encloses part of the gamma chain. F(1) is attached to F(0) by a central stalk formed by the gamma and epsilon chains, while a peripheral stalk is formed by the delta and b chains.

Its subcellular location is the cell membrane. In terms of biological role, f(1)F(0) ATP synthase produces ATP from ADP in the presence of a proton or sodium gradient. F-type ATPases consist of two structural domains, F(1) containing the extramembraneous catalytic core and F(0) containing the membrane proton channel, linked together by a central stalk and a peripheral stalk. During catalysis, ATP synthesis in the catalytic domain of F(1) is coupled via a rotary mechanism of the central stalk subunits to proton translocation. Its function is as follows. Key component of the F(0) channel; it plays a direct role in translocation across the membrane. A homomeric c-ring of between 10-14 subunits forms the central stalk rotor element with the F(1) delta and epsilon subunits. The protein is ATP synthase subunit c of Mycobacterium leprae (strain TN).